The following is a 167-amino-acid chain: Signal peptidase complex subunit 3A (167 aa).

Over 1-11 (MHTFGYRANAL) the chain is Cytoplasmic. The chain crosses the membrane as a helical; Signal-anchor for type II membrane protein span at residues 12–32 (LTFAVTALAFICAIASFSDKF). Over 33-167 (SNQNPSAEIQ…PGYSLPDAYR (135 aa)) the chain is Lumenal. Asn-136 carries N-linked (GlcNAc...) asparagine glycosylation.

It belongs to the SPCS3 family. Component of the signal peptidase complex (SPC) composed of a catalytic subunit SEC11 and three accessory subunits SPCS1, SPCS2 and SPCS3. The complex induces a local thinning of the ER membrane which is used to measure the length of the signal peptide (SP) h-region of protein substrates. This ensures the selectivity of the complex towards h-regions shorter than 18-20 amino acids.

It is found in the endoplasmic reticulum membrane. Essential component of the signal peptidase complex (SPC) which catalyzes the cleavage of N-terminal signal sequences from nascent proteins as they are translocated into the lumen of the endoplasmic reticulum. Essential for the SPC catalytic activity, possibly by stabilizing and positioning the active center of the complex close to the lumenal surface. The polypeptide is Signal peptidase complex subunit 3A (Arabidopsis thaliana (Mouse-ear cress)).